A 67-amino-acid polypeptide reads, in one-letter code: DNA-directed RNA polymerase subunit omega (67 aa).

It belongs to the RNA polymerase subunit omega family. As to quaternary structure, the RNAP catalytic core consists of 2 alpha, 1 beta, 1 beta' and 1 omega subunit. When a sigma factor is associated with the core the holoenzyme is formed, which can initiate transcription.

It catalyses the reaction RNA(n) + a ribonucleoside 5'-triphosphate = RNA(n+1) + diphosphate. Functionally, promotes RNA polymerase assembly. Latches the N- and C-terminal regions of the beta' subunit thereby facilitating its interaction with the beta and alpha subunits. In Nautilia profundicola (strain ATCC BAA-1463 / DSM 18972 / AmH), this protein is DNA-directed RNA polymerase subunit omega.